We begin with the raw amino-acid sequence, 542 residues long: Chaperonin GroEL 2 (542 aa).

ATP-binding positions include 30-33, K51, 87-91, G415, and D496; these read TLGP and DGTTT. Positions 523–542 are disordered; that stretch reads AEKPKKDGQPQMPPAPGMDF. Pro residues predominate over residues 533–542; sequence QMPPAPGMDF.

It belongs to the chaperonin (HSP60) family. Forms a cylinder of 14 subunits composed of two heptameric rings stacked back-to-back. Interacts with the co-chaperonin GroES.

It localises to the cytoplasm. The enzyme catalyses ATP + H2O + a folded polypeptide = ADP + phosphate + an unfolded polypeptide.. In terms of biological role, together with its co-chaperonin GroES, plays an essential role in assisting protein folding. The GroEL-GroES system forms a nano-cage that allows encapsulation of the non-native substrate proteins and provides a physical environment optimized to promote and accelerate protein folding. The sequence is that of Chaperonin GroEL 2 from Sinorhizobium medicae (strain WSM419) (Ensifer medicae).